The sequence spans 131 residues: Small ribosomal subunit protein uS19 (131 aa).

Belongs to the universal ribosomal protein uS19 family.

In terms of biological role, protein S19 forms a complex with S13 that binds strongly to the 16S ribosomal RNA. This chain is Small ribosomal subunit protein uS19, found in Nitrosopumilus maritimus (strain SCM1).